A 257-amino-acid chain; its full sequence is ATP synthase delta chain, chloroplastic (257 aa).

The transit peptide at 1–70 (MAALQNPVAL…PRGGALGTRM (70 aa)) directs the protein to the chloroplast.

The protein belongs to the ATPase delta chain family. In terms of assembly, F-type ATPases have 2 components, CF(1) - the catalytic core - and CF(0) - the membrane proton channel. CF(1) has five subunits: alpha(3), beta(3), gamma(1), delta(1), epsilon(1). CF(0) has three main subunits: a, b and c.

It localises to the plastid. It is found in the chloroplast thylakoid membrane. Functionally, this protein seems to be part of the stalk that links CF(0) to CF(1). It either transmits conformational changes from CF(0) into CF(1) or is implicated in proton conduction. In Spinacia oleracea (Spinach), this protein is ATP synthase delta chain, chloroplastic (ATPD).